Here is a 646-residue protein sequence, read N- to C-terminus: Esterase EstA (646 aa).

An N-terminal signal peptide occupies residues 1–24; sequence MIRMALKPLVAACLLASLSTAPQA. Over 25 to 397 the chain is Extracellular; the sequence is APSPYSTLVV…DSAASGDGNG (373 aa). The active-site Nucleophile is the S38. Catalysis depends on residues D310 and H313. One can recognise an Autotransporter domain in the interval 366–646; it reads QNVGQWRGFV…SVSLALSLDF (281 aa). Residues 398-408 form a beta stranded membrane-spanning segment; sequence YNLTLGGSYRI. The Periplasmic segment spans residues 409 to 410; the sequence is DE. The chain crosses the membrane as a beta stranded span at residues 411–421; that stretch reads AWRAGVAAGFY. The Extracellular segment spans residues 422-437; the sequence is RQKLEAGAKDSDYRMN. A beta stranded membrane pass occupies residues 438–447; the sequence is SYMASAFVQY. Topologically, residues 448–451 are periplasmic; that stretch reads QENR. A beta stranded transmembrane segment spans residues 452 to 461; the sequence is WWADAALTGG. Residues 462–488 are Extracellular-facing; it reads YLDYDDLKRKFALGGGERSEKGDTNGH. Residues 489–500 traverse the membrane as a beta stranded segment; that stretch reads LWAFSARLGYDI. The Periplasmic portion of the chain corresponds to 501-507; the sequence is AQQADSP. Residues 508–518 traverse the membrane as a beta stranded segment; that stretch reads WHLSPFVSADY. Over 519-547 the chain is Extracellular; that stretch reads ARVEVDGYSEKGASATALDYDDQKRSSKR. A beta stranded membrane pass occupies residues 548-558; it reads LGAGLQGKYAF. The Periplasmic segment spans residues 559-561; the sequence is GSD. A beta stranded membrane pass occupies residues 562–571; it reads TQLFAEYAHE. At 572–605 the chain is on the extracellular side; it reads REYEDDTQDLTMSLNSLPGNRFTLEGYTPQDHLN. A beta stranded membrane pass occupies residues 606–615; that stretch reads RVSLGFSQKL. Over 616–618 the chain is Periplasmic; the sequence is APE. A beta stranded transmembrane segment spans residues 619–628; it reads LSLRGGYNWR. The Extracellular portion of the chain corresponds to 629 to 636; it reads KGEDDTQQ. A beta stranded transmembrane segment spans residues 637–646; it reads SVSLALSLDF.

Belongs to the 'GDSL' lipolytic enzyme family.

The protein localises to the cell outer membrane. It carries out the reaction a carboxylic ester + H2O = an alcohol + a carboxylate + H(+). Its function is as follows. Esterase whose enzymatic activity is required for rhamnolipid production, all kinds of cell motility (swimming, swarming, and twitching), and biofilm formation; the exact role of EstA in these processes is unclear. In vitro, has pronounced esterase activities towards p-nitrophenyl esters of short acyl chain length (C4-C6) and Tween detergents. Also shows relatively high activity towards beta-naphthyl butyrate, whereas its activities towards triacylglycerols and acyls-CoA are negligible. The chain is Esterase EstA (estA) from Pseudomonas aeruginosa (strain ATCC 15692 / DSM 22644 / CIP 104116 / JCM 14847 / LMG 12228 / 1C / PRS 101 / PAO1).